We begin with the raw amino-acid sequence, 344 residues long: MVKVGIVGGTGYTGVELLRLLAQHPQAEVVVITSRSEAGMPVADMYPNLRGHYDGLAFSVPDVKTLGACDVVFFATPHGVAHALAGELLAAGTKVIDLSADFRLQDPVEWAKWYGQPHGAPQLLEDAVYGLPEVNREQIRNARLIAVPGCYPTATQLGFLPLLEAGIADNTRLIADCKSGVSGAGRGLNIGSLYSEANESFKAYAVKGHRHLPEITQGLRRAAGGDIGLTFVPHLVPMIRGIHSTLYATVADRSVDLQALFEKRYADEPFVDVMPAGSHPETRSVRGANVCRIAVHRPQGGDLVVVLSVIDNLVKGASGQAVQNMNILFGLDERAGLSHAGMMP.

Residue C150 is part of the active site.

The protein belongs to the NAGSA dehydrogenase family. Type 1 subfamily.

The protein resides in the cytoplasm. It carries out the reaction N-acetyl-L-glutamate 5-semialdehyde + phosphate + NADP(+) = N-acetyl-L-glutamyl 5-phosphate + NADPH + H(+). Its pathway is amino-acid biosynthesis; L-arginine biosynthesis; N(2)-acetyl-L-ornithine from L-glutamate: step 3/4. Catalyzes the NADPH-dependent reduction of N-acetyl-5-glutamyl phosphate to yield N-acetyl-L-glutamate 5-semialdehyde. The protein is N-acetyl-gamma-glutamyl-phosphate reductase of Pseudomonas syringae pv. syringae (strain B728a).